Consider the following 109-residue polypeptide: Phosphoribosyl-ATP pyrophosphatase (109 aa).

It belongs to the PRA-PH family.

It localises to the cytoplasm. The enzyme catalyses 1-(5-phospho-beta-D-ribosyl)-ATP + H2O = 1-(5-phospho-beta-D-ribosyl)-5'-AMP + diphosphate + H(+). The protein operates within amino-acid biosynthesis; L-histidine biosynthesis; L-histidine from 5-phospho-alpha-D-ribose 1-diphosphate: step 2/9. In Parvibaculum lavamentivorans (strain DS-1 / DSM 13023 / NCIMB 13966), this protein is Phosphoribosyl-ATP pyrophosphatase.